The primary structure comprises 404 residues: Methyltransferase-like protein 22 (404 aa).

2 disordered regions span residues 60–102 (TDSG…SLQA) and 115–145 (QLDE…DKVH). Residues 68–78 (SHRDVHTKEPP) show a composition bias toward basic and acidic residues. Low complexity predominate over residues 79–88 (SAETGSTGSP). Position 132 is a phosphoserine (S132).

This sequence belongs to the methyltransferase superfamily. METTL22 family. Interacts with members of the heat shock protein 90 and 70 families; these proteins probably are methylation substrates.

Its subcellular location is the nucleus. The catalysed reaction is L-lysyl-[protein] + 3 S-adenosyl-L-methionine = N(6),N(6),N(6)-trimethyl-L-lysyl-[protein] + 3 S-adenosyl-L-homocysteine + 3 H(+). Its function is as follows. Protein N-lysine methyltransferase. Trimethylates KIN at Lys-135 (in vitro). The protein is Methyltransferase-like protein 22 (METTL22) of Homo sapiens (Human).